A 545-amino-acid chain; its full sequence is Chaperonin GroEL (545 aa).

Residues 30 to 33, lysine 51, 87 to 91, glycine 415, and aspartate 496 contribute to the ATP site; these read TLGP and DGTTT. Residues 526-545 are disordered; that stretch reads PEPKAPAGGMPDMGGMGGMM. The span at 536–545 shows a compositional bias: gly residues; it reads PDMGGMGGMM.

Belongs to the chaperonin (HSP60) family. Forms a cylinder of 14 subunits composed of two heptameric rings stacked back-to-back. Interacts with the co-chaperonin GroES.

It localises to the cytoplasm. The catalysed reaction is ATP + H2O + a folded polypeptide = ADP + phosphate + an unfolded polypeptide.. Its function is as follows. Together with its co-chaperonin GroES, plays an essential role in assisting protein folding. The GroEL-GroES system forms a nano-cage that allows encapsulation of the non-native substrate proteins and provides a physical environment optimized to promote and accelerate protein folding. This Paracoccus denitrificans (strain Pd 1222) protein is Chaperonin GroEL.